Here is a 136-residue protein sequence, read N- to C-terminus: Histone H3 (136 aa).

The segment at 1-43 (MARTKQTARKSTGGKAPRKQLASKAARKSAPSTGGVKKPHRYK) is disordered. Residue Lys-5 is modified to N6,N6,N6-trimethyllysine; alternate. N6,N6-dimethyllysine; alternate is present on Lys-5. N6-methyllysine; alternate occurs at positions 5 and 10. Lys-10 is modified (N6-acetyllysine; alternate). Ser-11 is modified (phosphoserine). Lys-15 is modified (N6,N6-dimethyllysine; alternate). 5 positions are modified to N6-methyllysine; alternate: Lys-15, Lys-19, Lys-24, Lys-28, and Lys-37. N6-acetyllysine; alternate is present on residues Lys-15, Lys-19, Lys-24, Lys-28, and Lys-37. Residues Lys-28 and Lys-37 each carry the N6,N6,N6-trimethyllysine; alternate modification. N6,N6-dimethyllysine; alternate occurs at positions 28 and 37. Residues Lys-57 and Lys-65 each carry the N6-acetyllysine modification. Lys-80 bears the N6,N6,N6-trimethyllysine; alternate mark. An N6,N6-dimethyllysine; alternate modification is found at Lys-80. Lys-80 is modified (N6-methyllysine; alternate).

Belongs to the histone H3 family. As to quaternary structure, the nucleosome is a histone octamer containing two molecules each of H2A, H2B, H3 and H4 assembled in one H3-H4 heterotetramer and two H2A-H2B heterodimers. The octamer wraps approximately 147 bp of DNA. In terms of processing, phosphorylated by IPL1 to form H3S10ph. H3S10ph promotes subsequent H3K14ac formation by GCN5 and is required for transcriptional activation through TBP recruitment to the promoters. Mono-, di- and trimethylated by the COMPASS complex to form H3K4me1/2/3. H3K4me activates gene expression by regulating transcription elongation and plays a role in telomere length maintenance. H3K4me enrichment correlates with transcription levels, and occurs in a 5' to 3' gradient with H3K4me3 enrichment at the 5'-end of genes, shifting to H3K4me2 and then H3K4me1. Methylated by SET2 to form H3K36me. H3K36me represses gene expression. Methylated by DOT1 to form H3K79me. H3K79me is required for association of SIR proteins with telomeric regions and for telomeric silencing. The COMPASS-mediated formation of H3K4me2/3 and the DOT1-mediated formation of H3K79me require H2BK123ub1. Post-translationally, acetylation of histone H3 leads to transcriptional activation. H3K14ac formation by GCN5 is promoted by H3S10ph. H3K14ac can also be formed by ESA1. H3K56ac formation occurs predominantly in newly synthesized H3 molecules during G1, S and G2/M of the cell cycle and may be involved in DNA repair.

It localises to the nucleus. The protein resides in the chromosome. Core component of nucleosome. Nucleosomes wrap and compact DNA into chromatin, limiting DNA accessibility to the cellular machineries which require DNA as a template. Histones thereby play a central role in transcription regulation, DNA repair, DNA replication and chromosomal stability. DNA accessibility is regulated via a complex set of post-translational modifications of histones, also called histone code, and nucleosome remodeling. The chain is Histone H3 (HHT1) from Candida glabrata (strain ATCC 2001 / BCRC 20586 / JCM 3761 / NBRC 0622 / NRRL Y-65 / CBS 138) (Yeast).